The sequence spans 1392 residues: L-2-aminoadipate reductase (1392 aa).

Lys541 participates in a covalent cross-link: Glycyl lysine isopeptide (Lys-Gly) (interchain with G-Cter in ubiquitin). Residues 843-920 (SQFTNVEREV…AFAAEIDRIK (78 aa)) form the Carrier domain. At Ser880 the chain carries O-(pantetheine 4'-phosphoryl)serine. Residue Lys1276 forms a Glycyl lysine isopeptide (Lys-Gly) (interchain with G-Cter in ubiquitin) linkage.

The protein belongs to the ATP-dependent AMP-binding enzyme family. The cofactor is pantetheine 4'-phosphate.

It carries out the reaction (S)-2-amino-6-oxohexanoate + NADP(+) + H2O = L-2-aminoadipate + NADPH + 2 H(+). The catalysed reaction is (S)-2-amino-6-oxohexanoate + NAD(+) + H2O = L-2-aminoadipate + NADH + 2 H(+). The enzyme catalyses (S)-2-amino-6-oxohexanoate + AMP + diphosphate + NADP(+) = L-2-aminoadipate + ATP + NADPH + H(+). The protein operates within amino-acid biosynthesis; L-lysine biosynthesis via AAA pathway; L-lysine from L-alpha-aminoadipate (fungal route): step 1/3. Its function is as follows. Catalyzes the activation of alpha-aminoadipate by ATP-dependent adenylation and the reduction of activated alpha-aminoadipate by NADPH. The activated alpha-aminoadipate is bound to the phosphopantheinyl group of the enzyme itself before it is reduced to (S)-2-amino-6-oxohexanoate. The protein is L-2-aminoadipate reductase (LYS2) of Saccharomyces cerevisiae (strain ATCC 204508 / S288c) (Baker's yeast).